Here is a 737-residue protein sequence, read N- to C-terminus: ATP-dependent RNA helicase DDX50 (737 aa).

Residues 1–131 form a disordered region; sequence MPGKLLWGDI…SDNKLEETLT (131 aa). Residues 11 to 20 are compositionally biased toward acidic residues; that stretch reads MELEAPLEES. Basic and acidic residues-rich tracts occupy residues 38-51, 67-87, and 117-131; these read HYDS…RENG, KEKL…EFSK, and STHK…ETLT. A phosphoserine mark is found at Ser-41, Ser-82, Ser-86, Ser-121, and Ser-122. Lys-125 participates in a covalent cross-link: Glycyl lysine isopeptide (Lys-Gly) (interchain with G-Cter in SUMO2). The Q motif motif lies at 137–165; the sequence is GAFSNFPISEETIKLLKGRGVTYLFPIQV. A Helicase ATP-binding domain is found at 168-347; sequence FGPVYEGKDL…KKYMKSRYEQ (180 aa). 181 to 188 lines the ATP pocket; the sequence is ARTGTGKT. Thr-247 is subject to Phosphothreonine. The DEVD box signature appears at 290–293; that stretch reads DEVD. The Helicase C-terminal domain occupies 380 to 524; it reads DVLQVYSGSE…GVPSTMDLVK (145 aa). Phosphoserine is present on Ser-518. Residues 668-737 are disordered; it reads YDGNTSSNSR…RSGGHKRSFD (70 aa). Residues 673–687 show a composition bias toward low complexity; that stretch reads SSNSRQRSGWSSGRS. A compositionally biased stretch (gly residues) spans 691 to 701; that stretch reads GRSGGRSGGRS. The segment covering 702 to 712 has biased composition (low complexity); it reads GRQSRQGSRSG. The segment covering 720 to 737 has biased composition (basic residues); sequence RSGNRNRSRSGGHKRSFD.

Belongs to the DEAD box helicase family. DDX21/DDX50 subfamily. As to quaternary structure, interacts with C1QBP. Interacts with the ubiquitin ligase CTLH complex through GID4. Interacts with TICAM1. In terms of tissue distribution, highest expression in skeletal muscle, liver, heart, placenta, and kidney.

The protein resides in the nucleus. The protein localises to the nucleolus. Its subcellular location is the cytoplasm. The catalysed reaction is ATP + H2O = ADP + phosphate + H(+). Functionally, ATP-dependent RNA helicase that may play a role in various aspects of RNA metabolism including pre-mRNA splicing or ribosomal RNA production. Also acts as a viral restriction factor and promotes the activation of the NF-kappa-B and IRF3 signaling pathways following its stimulation with viral RNA or infection with RNA and DNA viruses. For instance, decreases vaccinia virus, herpes simplex virus, Zika virus or dengue virus replication during the early stage of infection. Mechanistically, acts via the adapter TICAM1 and independently of the DDX1-DDX21-DHX36 helicase complex to induce the production of interferon-beta. The sequence is that of ATP-dependent RNA helicase DDX50 (DDX50) from Homo sapiens (Human).